The primary structure comprises 438 residues: 23S rRNA (uracil(1939)-C(5))-methyltransferase RlmD (438 aa).

In terms of domain architecture, TRAM spans 11–69 (LQPESKHQQVLVEKLDHQGAGIAYLNKKPLFIDGTLPGEEVVTQLTESKSKFARGKLIK). C82, C88, C91, and C169 together coordinate [4Fe-4S] cluster. Q272, F301, N306, E322, N349, and D370 together coordinate S-adenosyl-L-methionine. The Nucleophile role is filled by C396.

Belongs to the class I-like SAM-binding methyltransferase superfamily. RNA M5U methyltransferase family. RlmD subfamily.

It catalyses the reaction uridine(1939) in 23S rRNA + S-adenosyl-L-methionine = 5-methyluridine(1939) in 23S rRNA + S-adenosyl-L-homocysteine + H(+). In terms of biological role, catalyzes the formation of 5-methyl-uridine at position 1939 (m5U1939) in 23S rRNA. The sequence is that of 23S rRNA (uracil(1939)-C(5))-methyltransferase RlmD from Vibrio vulnificus (strain YJ016).